Here is a 627-residue protein sequence, read N- to C-terminus: Meiosis-specific transcription factor NDT80 (627 aa).

The segment at residues 28–335 (EEDTPVILTQ…RSPSNYASSQ (308 aa)) is a DNA-binding region (NDT80). The tract at residues 324–410 (RGRSPSNYAS…MEASKENEDP (87 aa)) is disordered. Composition is skewed to polar residues over residues 327–351 (SPSN…SQNS) and 386–401 (SGAS…STPM).

As to quaternary structure, binds to DNA as a monomer. Phosphorylated by pachytene checkpoint kinase IME2, but also phosphorylated in an IME2-independent manner. Phosphorylation probably eliminates SUM1-mediated repression and is also required for full transcriptional activation activity. Phosphorylation of the DNA-binding domain by IME2 does not alter DNA binding affinity.

The protein resides in the nucleus. In terms of biological role, transcription factor required for successful completion of meiosis and spore formation. Gets activated after completion of meiotic recombination at the end of prophase I. Recognizes and binds to the middle sporulation element (MSE) 5'-C[AG]CAAA[AT]-3' in the promoter region of stage-specific genes that are required for progression through meiosis and sporulation. Competes for binding to MSE with the transcriptional repressor SUM1, which represses middle sporulation-specific genes during mitosis and early sporulation. The protein is Meiosis-specific transcription factor NDT80 (NDT80) of Saccharomyces cerevisiae (strain ATCC 204508 / S288c) (Baker's yeast).